The sequence spans 129 residues: Replication initiation control protein YabA (129 aa).

Residues histidine 103, cysteine 105, cysteine 119, and cysteine 122 each coordinate Zn(2+).

The protein belongs to the YabA family. In terms of assembly, homotetramer. Interacts with both DnaA and DnaN, acting as a bridge between these two proteins. Zn(2+) serves as cofactor.

The protein resides in the cytoplasm. Its subcellular location is the nucleoid. In terms of biological role, involved in control of chromosome replication initiation. Inhibits the cooperative binding of DnaA to the oriC region, thus negatively regulating initiation of chromosome replication. Inhibits the ability of DnaA-ATP to form a helix on DNA; does not disassemble preformed DnaA-DNA helices. Decreases the residence time of DnaA on the chromosome at its binding sites (oriC, replication forks and promoter-binding sites). Tethers DnaA to the replication machinery via the DNA polymerase beta sliding clamp subunit (dnaN). Associates with oriC and other DnaA targets on the chromosome in a DnaA-dependent manner. The sequence is that of Replication initiation control protein YabA from Listeria monocytogenes serotype 4b (strain CLIP80459).